An 826-amino-acid polypeptide reads, in one-letter code: Lon protease (826 aa).

Over residues 1-20 the composition is skewed to basic and acidic residues; that stretch reads MSEEELNNRDTESKQEHDEN. The disordered stretch occupies residues 1–27; it reads MSEEELNNRDTESKQEHDENNSNFEAG. The region spanning 33–231 is the Lon N-terminal domain; the sequence is LPVLPLREVI…KVHALLEKEL (199 aa). 384 to 391 lines the ATP pocket; sequence GPPGVGKT. A Lon proteolytic domain is found at 620-801; the sequence is ENLVGMTTGL…SEALTFTLAE (182 aa). Active-site residues include Ser-707 and Lys-750.

This sequence belongs to the peptidase S16 family. Homohexamer. Organized in a ring with a central cavity.

The protein localises to the cytoplasm. It catalyses the reaction Hydrolysis of proteins in presence of ATP.. Functionally, ATP-dependent serine protease that mediates the selective degradation of mutant and abnormal proteins as well as certain short-lived regulatory proteins. Required for cellular homeostasis and for survival from DNA damage and developmental changes induced by stress. Degrades polypeptides processively to yield small peptide fragments that are 5 to 10 amino acids long. Binds to DNA in a double-stranded, site-specific manner. The chain is Lon protease from Neorickettsia sennetsu (strain ATCC VR-367 / Miyayama) (Ehrlichia sennetsu).